A 396-amino-acid polypeptide reads, in one-letter code: Elongation factor Tu (396 aa).

In terms of domain architecture, tr-type G spans 10-206 (KPHVNVGTIG…AVDAYIPTPQ (197 aa)). Residues 19-26 (GHVDHGKT) form a G1 region. 19–26 (GHVDHGKT) lines the GTP pocket. Thr-26 contacts Mg(2+). The tract at residues 60 to 64 (GITIA) is G2. Residues 81–84 (DCPG) form a G3 region. GTP-binding positions include 81 to 85 (DCPGH) and 136 to 139 (NKVD). The G4 stretch occupies residues 136-139 (NKVD). Positions 174-176 (SAL) are G5.

Belongs to the TRAFAC class translation factor GTPase superfamily. Classic translation factor GTPase family. EF-Tu/EF-1A subfamily. Monomer.

Its subcellular location is the cytoplasm. The catalysed reaction is GTP + H2O = GDP + phosphate + H(+). Functionally, GTP hydrolase that promotes the GTP-dependent binding of aminoacyl-tRNA to the A-site of ribosomes during protein biosynthesis. The chain is Elongation factor Tu from Anaeromyxobacter dehalogenans (strain 2CP-C).